A 391-amino-acid polypeptide reads, in one-letter code: Nuclear hormone receptor family member nhr-115 (391 aa).

The segment at residues 5 to 77 (LFPCQICGQN…IGMDASKFQY (73 aa)) is a DNA-binding region (nuclear receptor). Residues 8–28 (CQICGQNSHGTHFGIVSCRAC) form an NR C4-type zinc finger. The NR C4-type; atypical zinc-finger motif lies at 41–65 (ARKGCLTNFKDKGSCFCKPCRLRKC). Residues 130–388 (YLDHGCETPI…FSHPEMFDDS (259 aa)) enclose the NR LBD domain.

Belongs to the nuclear hormone receptor family.

It is found in the nucleus. Orphan nuclear receptor. This chain is Nuclear hormone receptor family member nhr-115 (nhr-115), found in Caenorhabditis elegans.